Reading from the N-terminus, the 206-residue chain is Large ribosomal subunit protein uL4 (206 aa).

Residues 44–87 (KRQGTQKAKTRSEVRGGGRKPWRQKGTGHARQGSTRSPQWTGGG) form a disordered region. Residues 60–71 (GGRKPWRQKGTG) show a composition bias toward basic residues.

The protein belongs to the universal ribosomal protein uL4 family. As to quaternary structure, part of the 50S ribosomal subunit.

Its function is as follows. One of the primary rRNA binding proteins, this protein initially binds near the 5'-end of the 23S rRNA. It is important during the early stages of 50S assembly. It makes multiple contacts with different domains of the 23S rRNA in the assembled 50S subunit and ribosome. Functionally, forms part of the polypeptide exit tunnel. This chain is Large ribosomal subunit protein uL4, found in Agathobacter rectalis (strain ATCC 33656 / DSM 3377 / JCM 17463 / KCTC 5835 / VPI 0990) (Eubacterium rectale).